A 471-amino-acid chain; its full sequence is tRNA-2-methylthio-N(6)-dimethylallyladenosine synthase (471 aa).

Positions 31–149 (LYYHIETYGC…FPQLLWEALN (119 aa)) constitute an MTTase N-terminal domain. 6 residues coordinate [4Fe-4S] cluster: Cys40, Cys76, Cys110, Cys186, Cys190, and Cys193. The 231-residue stretch at 172 to 402 (RDSNLKAWVN…IELQNKISLE (231 aa)) folds into the Radical SAM core domain. Positions 405-468 (AELRGKIVEV…AWTMQGELVE (64 aa)) constitute a TRAM domain.

Belongs to the methylthiotransferase family. MiaB subfamily. As to quaternary structure, monomer. Requires [4Fe-4S] cluster as cofactor.

Its subcellular location is the cytoplasm. The catalysed reaction is N(6)-dimethylallyladenosine(37) in tRNA + (sulfur carrier)-SH + AH2 + 2 S-adenosyl-L-methionine = 2-methylsulfanyl-N(6)-dimethylallyladenosine(37) in tRNA + (sulfur carrier)-H + 5'-deoxyadenosine + L-methionine + A + S-adenosyl-L-homocysteine + 2 H(+). Functionally, catalyzes the methylthiolation of N6-(dimethylallyl)adenosine (i(6)A), leading to the formation of 2-methylthio-N6-(dimethylallyl)adenosine (ms(2)i(6)A) at position 37 in tRNAs that read codons beginning with uridine. The protein is tRNA-2-methylthio-N(6)-dimethylallyladenosine synthase of Thermoanaerobacter pseudethanolicus (strain ATCC 33223 / 39E) (Clostridium thermohydrosulfuricum).